Consider the following 424-residue polypeptide: Inhibin beta A chain (424 aa).

A signal peptide spans 1 to 20; the sequence is MPLLWLRGFLLASCWIIVRS. Positions 21–308 are excised as a propeptide; it reads SPTPGSEGHG…EDHPHRRRRR (288 aa). Asparagine 165 is a glycosylation site (N-linked (GlcNAc...) asparagine). Residues 264–275 show a composition bias toward basic and acidic residues; it reads EVDGDGKKKDGS. The disordered stretch occupies residues 264–306; it reads EVDGDGKKKDGSDGGLEEEKEQSHRPFLMLQARQSEDHPHRRR. Intrachain disulfides connect cysteine 312/cysteine 320, cysteine 319/cysteine 389, cysteine 348/cysteine 421, and cysteine 352/cysteine 423.

It belongs to the TGF-beta family. As to quaternary structure, dimeric, linked by one or more disulfide bonds. Inhibin A is a dimer of alpha/INHA and beta-A/INHBA. Activin A is a homodimer of beta-A/INHBA. Activin AB is a dimer of beta-A/INHBA and beta-B/INHBB. Interacts with FST and FSTL3; these interactions prevent activin A interaction to its type II receptor. Activin A interacts with ACVR2A. Activin A interacts with BMPR2. Inhibin A interacts with ACVR1; this interaction creates a non-signaling complex (NSC) that inhibits ACVR1-mediated BMP signaling. Inhibin A interacts with ACVR2A.

It is found in the secreted. Its function is as follows. Inhibins/activins are involved in regulating a number of diverse functions such as hypothalamic and pituitary hormone secretion, gonadal hormone secretion, germ cell development and maturation, erythroid differentiation, insulin secretion, nerve cell survival, embryonic axial development or bone growth, depending on their subunit composition. In terms of biological role, activin A is a homodimer of INHBA that plays a role in several essential biological processes including embryonic development, stem cell maintenance and differentiation, haematopoiesis, cell proliferation and tissue fibrosis. Signals through type I (such as ACVR1B or ACVR1C) and type II receptors (such as ACVR2A, ACVR2B or BMPR2) which, upon ligand binding, phosphorylate SMAD2 and SMAD3 intracellular signaling mediators that form a complex with SMAD4, translocate to the nucleus and modulate gene expression. Can also activate alternative non-canonical intracellular signaling pathways including the p38 MAPK, extracellular signal-regulated kinases 1/2 (ERK1/2) and c-Jun N-terminal kinases (JNKs) to modulate cell migration and differentiation. Alternatively, promotes osteoblastic differentiation via ACVRL1-SMAD1/5/9 pathway. In addition, can engage the type I receptor ACVR1 to form an ACVR1-activin A-type II receptor non-signaling complex (NSC) that renders receptors unavailable for engagement with BMPs, hence resulting in an apparent inhibition of ACVR1-mediated BMP signaling. Functionally, inhibin A is a dimer of alpha/INHA and beta-A/INHBA that functions as a feedback regulator in the hypothalamic-pituitary-gonadal (HPG) axis. Inhibits the secretion of FSH from the anterior pituitary gland by acting on pituitary gonadotrope cells. Antagonizes activin A by binding to the proteoglycan, betaglycan, and forming a stable complex with and, thereby, sequestering type II activin receptors while excluding type I receptor. The chain is Inhibin beta A chain (Inhba) from Rattus norvegicus (Rat).